Consider the following 139-residue polypeptide: D-ribose pyranase (139 aa).

The Proton donor role is filled by His-20. Residues Asp-28, His-106, and 128–130 (YAN) each bind substrate.

The protein belongs to the RbsD / FucU family. RbsD subfamily. In terms of assembly, homodecamer.

The protein resides in the cytoplasm. The catalysed reaction is beta-D-ribopyranose = beta-D-ribofuranose. Its pathway is carbohydrate metabolism; D-ribose degradation; D-ribose 5-phosphate from beta-D-ribopyranose: step 1/2. Its function is as follows. Catalyzes the interconversion of beta-pyran and beta-furan forms of D-ribose. The chain is D-ribose pyranase from Histophilus somni (strain 2336) (Haemophilus somnus).